The primary structure comprises 192 residues: Dynein axonemal light chain 1 (192 aa).

LRR repeat units follow at residues 49 to 70, 71 to 92, 94 to 115, and 116 to 137; these read NCEKLSLSTNCIEKIANLNGLK, YLKILSLGRNNIKNLNGLEAVG, TLEELWISYNLIEKLKGIHVMK, and KLKVLYMSNNLVKDWAEFSKLG. One can recognise an LRRCT domain in the interval 150-192; sequence NPLEEKHTAEGNWMEEAVKRLPKLKKLDGNPVIKQEEEEGDES.

The protein belongs to the dynein light chain LC1-type family. As to quaternary structure, interacts with DNAH5, a outer arm dynein heavy chain. Interacts with tubulin located within the A-tubule of the outer doublets in a ATP-independent manner.

The protein localises to the cytoplasm. Its subcellular location is the cytoskeleton. The protein resides in the cilium axoneme. Functionally, part of the multisubunit axonemal ATPase complexes that generate the force for cilia motility and govern beat frequency. Component of the outer arm dynein (ODA). May be involved in a mechanosensory feedback mechanism controlling ODA activity based on external conformational cues by tethering the outer arm dynein heavy chain (DNAH5) to the microtubule within the axoneme. The polypeptide is Dynein axonemal light chain 1 (dnal1) (Xenopus laevis (African clawed frog)).